The following is a 678-amino-acid chain: ABC transporter G family member 13 (678 aa).

The region spanning 10-254 (VAWEDLTVVI…FGEAGFPCPS (245 aa)) is the ABC transporter domain. Residue 48–55 (GPSGSGKS) participates in ATP binding. The ABC transmembrane type-2 domain maps to 355 to 567 (KQLRILTQRS…ALQGAYKNEM (213 aa)). 6 consecutive transmembrane segments (helical) span residues 374-394 (YYWM…SIFF), 409-429 (CGGF…QSFI), 446-466 (VAVY…LMCL), 490-510 (LDLI…ASVV), 513-533 (FLMG…SAGF), and 602-622 (LDLA…FAIL). Serine 658 is subject to Phosphoserine.

It belongs to the ABC transporter superfamily. ABCG family. Eye pigment precursor importer (TC 3.A.1.204) subfamily.

It localises to the membrane. The chain is ABC transporter G family member 13 (ABCG13) from Arabidopsis thaliana (Mouse-ear cress).